A 175-amino-acid chain; its full sequence is Large ribosomal subunit protein uL6 (175 aa).

It belongs to the universal ribosomal protein uL6 family. As to quaternary structure, part of the 50S ribosomal subunit.

Its function is as follows. This protein binds to the 23S rRNA, and is important in its secondary structure. It is located near the subunit interface in the base of the L7/L12 stalk, and near the tRNA binding site of the peptidyltransferase center. The chain is Large ribosomal subunit protein uL6 from Xylella fastidiosa (strain M12).